Here is a 213-residue protein sequence, read N- to C-terminus: Methylthioribulose-1-phosphate dehydratase (213 aa).

Zn(2+) contacts are provided by His-104 and His-106.

The protein belongs to the aldolase class II family. MtnB subfamily. Requires Zn(2+) as cofactor.

The catalysed reaction is 5-(methylsulfanyl)-D-ribulose 1-phosphate = 5-methylsulfanyl-2,3-dioxopentyl phosphate + H2O. It participates in amino-acid biosynthesis; L-methionine biosynthesis via salvage pathway; L-methionine from S-methyl-5-thio-alpha-D-ribose 1-phosphate: step 2/6. Catalyzes the dehydration of methylthioribulose-1-phosphate (MTRu-1-P) into 2,3-diketo-5-methylthiopentyl-1-phosphate (DK-MTP-1-P). The chain is Methylthioribulose-1-phosphate dehydratase from Stenotrophomonas maltophilia (strain K279a).